Reading from the N-terminus, the 507-residue chain is E3 ubiquitin-protein ligase TRIM31 (507 aa).

An RING-type zinc finger spans residues 16–56 (CPICMEILQDPVTIDCGHNFCLQCISQVGKTSEKIQCPLCK). The B box-type zinc finger occupies 89-130 (KEDSRCQRHKEKLHYFCEQDGAFLCVVCRDSKDHKSHNVTLI). The Zn(2+) site is built by cysteine 94, histidine 97, cysteine 116, and histidine 122. Coiled coils occupy residues 176–241 (EKLK…LQSS) and 269–298 (EDLEKKCSEAKARHESIIKTLTELKDDMNA). The 193-residue stretch at 315 to 507 (EKESWSLLQK…VACSHITLSP (193 aa)) folds into the B30.2/SPRY domain.

It belongs to the TRIM/RBCC family. May form oligomers. Interacts with isoform p52shc of SHC1. Post-translationally, auto-ubiquitinated (in vitro). In terms of tissue distribution, highly expressed in the gastrointestrinal tract, with high expression in the small intestine, moderate in the large intestine and weak in the stomach and esophagus.

It is found in the cytoplasm. The protein localises to the mitochondrion. It carries out the reaction S-ubiquitinyl-[E2 ubiquitin-conjugating enzyme]-L-cysteine + [acceptor protein]-L-lysine = [E2 ubiquitin-conjugating enzyme]-L-cysteine + N(6)-ubiquitinyl-[acceptor protein]-L-lysine.. It participates in protein modification; protein ubiquitination. Its function is as follows. E3 ubiquitin-protein ligase that acts as a regulator of antiviral immune response and inflammation by mediating ubiquitination of substrates. Acts as a regulator of innate immune defense against viruses by mediating 'Lys-63'-linked ubiquitination of MAVS, promoting MAVS polymerization and formation of three-stranded helical filaments on mitochondria. Acts as a negative regulator of the NLRP3 inflammasome by catalyzing 'Lys-48'-linked ubiquitination of NLRP3, leading to its degradation. Regulator of Src-induced anchorage independent cell growth. This is E3 ubiquitin-protein ligase TRIM31 from Mus musculus (Mouse).